We begin with the raw amino-acid sequence, 209 residues long: Na(+)-translocating NADH-quinone reductase subunit D (209 aa).

Helical transmembrane passes span 42-62, 70-90, 103-123, 131-151, and 178-198; these read LVMT…ISLI, VRII…DQIL, VFVG…AYAM, FMDG…VGFV, and NGLF…IWGL.

This sequence belongs to the NqrDE/RnfAE family. Composed of six subunits; NqrA, NqrB, NqrC, NqrD, NqrE and NqrF.

It localises to the cell inner membrane. It catalyses the reaction a ubiquinone + n Na(+)(in) + NADH + H(+) = a ubiquinol + n Na(+)(out) + NAD(+). NQR complex catalyzes the reduction of ubiquinone-1 to ubiquinol by two successive reactions, coupled with the transport of Na(+) ions from the cytoplasm to the periplasm. NqrA to NqrE are probably involved in the second step, the conversion of ubisemiquinone to ubiquinol. The polypeptide is Na(+)-translocating NADH-quinone reductase subunit D (Yersinia enterocolitica serotype O:8 / biotype 1B (strain NCTC 13174 / 8081)).